A 181-amino-acid chain; its full sequence is Inner membrane-spanning protein YciB (181 aa).

A run of 5 helical transmembrane segments spans residues 8-28, 53-73, 76-96, 121-141, and 149-169; these read FPII…ATAA, ITLI…NAIF, WKPT…HFFG, LSWA…VYNF, and FKLF…AFYI.

This sequence belongs to the YciB family.

The protein resides in the cell inner membrane. Functionally, plays a role in cell envelope biogenesis, maintenance of cell envelope integrity and membrane homeostasis. In Coxiella burnetii (strain RSA 331 / Henzerling II), this protein is Inner membrane-spanning protein YciB.